The sequence spans 353 residues: Protein RecA (353 aa).

67-74 (GPESSGKT) contributes to the ATP binding site.

Belongs to the RecA family.

The protein localises to the cytoplasm. Its function is as follows. Can catalyze the hydrolysis of ATP in the presence of single-stranded DNA, the ATP-dependent uptake of single-stranded DNA by duplex DNA, and the ATP-dependent hybridization of homologous single-stranded DNAs. It interacts with LexA causing its activation and leading to its autocatalytic cleavage. This Chlamydia pneumoniae (Chlamydophila pneumoniae) protein is Protein RecA.